Here is a 459-residue protein sequence, read N- to C-terminus: Endoglucanase EG-1 (459 aa).

A signal peptide spans 1 to 22; it reads MAPSVTLPLTTAILAIARLVAA. Glutamine 23 carries the post-translational modification Pyrrolidone carboxylic acid. The catalytic stretch occupies residues 23 to 397; that stretch reads QQPGTSTPEV…DIGSTTNSTA (375 aa). 8 cysteine pairs are disulfide-bonded: cysteine 41–cysteine 47, cysteine 71–cysteine 92, cysteine 82–cysteine 88, cysteine 161–cysteine 360, cysteine 193–cysteine 216, cysteine 197–cysteine 215, cysteine 236–cysteine 241, and cysteine 246–cysteine 315. The N-linked (GlcNAc) asparagine glycan is linked to asparagine 78. Asparagine 204 is a glycosylation site (N-linked (GlcNAc...) (high mannose) asparagine). Catalysis depends on glutamate 218, which acts as the Nucleophile. Catalysis depends on glutamate 223, which acts as the Proton donor/acceptor. Positions 390-425 are disordered; it reads GSTTNSTAPPPPPASSTTFSTTRRSSTTSSSPSCTQ. N-linked (GlcNAc...) asparagine glycosylation is present at asparagine 394. A linker region spans residues 398-423; that stretch reads PPPPPASSTTFSTTRRSSTTSSSPSC. The span at 404–425 shows a compositional bias: low complexity; the sequence is SSTTFSTTRRSSTTSSSPSCTQ. 3 disulfide bridges follow: cysteine 423/cysteine 439, cysteine 431/cysteine 448, and cysteine 442/cysteine 458. The 37-residue stretch at 423 to 459 folds into the CBM1 domain; that stretch reads CTQTHWGQCGGIGYSGCKTCTSGTTCQYSNDYYSQCL.

The protein belongs to the glycosyl hydrolase 7 (cellulase C) family. Asn-204 contains mainly a high-mannose-type glycan (Hex(7-9)GlcNAc(2)), with a small fraction (8%) bearing a single GlcNAc at this site.

It is found in the secreted. It carries out the reaction Endohydrolysis of (1-&gt;4)-beta-D-glucosidic linkages in cellulose, lichenin and cereal beta-D-glucans.. Endoglucanase (EG) that cleaves the internal beta-1,4-glucosidic bonds in cellulose. The degradation of cellulose involves an interplay between different cellulolytic enzymes. Hydrolysis starts with EGs, which cut internal glycosidic linkages to reduce the polymerization degree of the substrate and creates new chain ends for exocellobiohydrolases (CBHs). The CBH release the disaccharide cellobiose from the non-reducing end of the cellulose polymer chain. Finally, beta-1,4-glucosidases hydrolyze the cellobiose and other short cello-oligosaccharides into glucose units. This chain is Endoglucanase EG-1 (egl1), found in Hypocrea jecorina (Trichoderma reesei).